Reading from the N-terminus, the 277-residue chain is MGLLECCARCLVGAPFASLVATGLCFFGVALFCGCGHEALTGTEKLIETYFSKNYQDYEYLINVIHAFQYVIYGTASFFFLYGALLLAEGFYTTGAVRQIFGDYKTTICGKGLSATVTGGQKGRGSRGQHQAHSLERVRHCLGKWLGHPDKFVGITYALTVVWLLVFACSAVPVYIYFNTWTTCQSIAFPSKTSASIGSLCADARMYGVLPWNAFPGKVCGSNLLSICKTAEFQMTFHLFIAAFVGAAATLISLLTFMIAATYNFAVLKLMGRGTKF.

Topologically, residues 1 to 10 are cytoplasmic; sequence MGLLECCARC. S-palmitoyl cysteine attachment occurs at residues Cys-6, Cys-7, and Cys-10. Residues 11 to 36 form a helical membrane-spanning segment; the sequence is LVGAPFASLVATGLCFFGVALFCGCG. Residues 37–59 lie on the Extracellular side of the membrane; that stretch reads HEALTGTEKLIETYFSKNYQDYE. A helical membrane pass occupies residues 60–88; that stretch reads YLINVIHAFQYVIYGTASFFFLYGALLLA. Over 89 to 151 the chain is Cytoplasmic; that stretch reads EGFYTTGAVR…LGKWLGHPDK (63 aa). Cys-109 carries S-palmitoyl cysteine lipidation. Ser-114 carries the post-translational modification Phosphoserine. Phosphothreonine is present on residues Thr-116 and Thr-118. Cys-141 carries S-palmitoyl cysteine lipidation. A helical membrane pass occupies residues 152-178; the sequence is FVGITYALTVVWLLVFACSAVPVYIYF. Topologically, residues 179–238 are extracellular; the sequence is NTWTTCQSIAFPSKTSASIGSLCADARMYGVLPWNAFPGKVCGSNLLSICKTAEFQMTFH. Disulfide bonds link Cys-184/Cys-228 and Cys-201/Cys-220. Residue Ser-199 is the site of O-palmitoyl serine attachment. A helical membrane pass occupies residues 239–268; it reads LFIAAFVGAAATLISLLTFMIAATYNFAVL. The Cytoplasmic segment spans residues 269-277; the sequence is KLMGRGTKF.

Belongs to the myelin proteolipid protein family.

Its subcellular location is the cell membrane. It localises to the myelin membrane. This is the major myelin protein from the central nervous system. It plays an important role in the formation or maintenance of the multilamellar structure of myelin. This is Myelin proteolipid protein (PLP1) from Macaca fascicularis (Crab-eating macaque).